The chain runs to 218 residues: Mediator of RNA polymerase II transcription subunit 20 (218 aa).

Belongs to the Mediator complex subunit 20 family. Component of the Mediator complex.

It localises to the nucleus. Its function is as follows. Component of the Mediator complex, a coactivator involved in the regulated transcription of nearly all RNA polymerase II-dependent genes. Mediator functions as a bridge to convey information from gene-specific regulatory proteins to the basal RNA polymerase II transcription machinery. Mediator is recruited to promoters by direct interactions with regulatory proteins and serves as a scaffold for the assembly of a functional preinitiation complex with RNA polymerase II and the general transcription factors. The sequence is that of Mediator of RNA polymerase II transcription subunit 20 (MED20) from Anopheles gambiae (African malaria mosquito).